A 51-amino-acid polypeptide reads, in one-letter code: Ribosome biogenesis protein Nop10 (51 aa).

The protein belongs to the NOP10 family.

In terms of biological role, involved in ribosome biogenesis; more specifically in 18S rRNA pseudouridylation and in cleavage of pre-rRNA. This is Ribosome biogenesis protein Nop10 from Methanococcus maripaludis (strain C5 / ATCC BAA-1333).